The primary structure comprises 289 residues: ATP synthase gamma chain (289 aa).

Belongs to the ATPase gamma chain family. F-type ATPases have 2 components, CF(1) - the catalytic core - and CF(0) - the membrane proton channel. CF(1) has five subunits: alpha(3), beta(3), gamma(1), delta(1), epsilon(1). CF(0) has three main subunits: a, b and c.

Its subcellular location is the cell inner membrane. Its function is as follows. Produces ATP from ADP in the presence of a proton gradient across the membrane. The gamma chain is believed to be important in regulating ATPase activity and the flow of protons through the CF(0) complex. This Acinetobacter baylyi (strain ATCC 33305 / BD413 / ADP1) protein is ATP synthase gamma chain.